Consider the following 378-residue polypeptide: Isobutylamine N-hydroxylase (378 aa).

As to quaternary structure, exists in dimeric or trimeric form depending upon buffer conditions. It can form an isobutylamine N-hydroxylase two component enzyme system formed of a flavin reductase component (VlmR) and a monooxygenase component (VlmH).

It catalyses the reaction 2-methylpropan-1-amine + FADH2 + O2 = N-(2-methylpropyl)hydroxylamine + FAD + H2O + 2 H(+). It carries out the reaction 2-methylpropan-1-amine + FMNH2 + O2 = N-(2-methylpropyl)hydroxylamine + FMN + H2O + 2 H(+). With respect to regulation, inhibited by 5',5'-dithio-bis(2-nitrobenzoic acid) (DTNB) and 4-(hydroxymercuri)benzoic acid (p-HMB). In terms of biological role, involved in the biosynthesis of the azoxy antibiotic valanimycin, which has an antitumor activity. Catalyzes the oxidation of isobutylamine to isobutylhydroxylamine via the formation of a flavin 4a-hydroperoxide. Unlike other known N-hydroxylases, isobutylamine N-hydroxylase cannot carry out the reduction of the flavin cofactor and requires the NADPH-flavin oxidoreductase VlmR. Also able to oxidize propan-1-amine, butan-1-amine, butan-2-amine and benzylamine. It has a similar activity with either FMNH(2) or FADH(2). This Streptomyces viridifaciens protein is Isobutylamine N-hydroxylase.